Here is a 143-residue protein sequence, read N- to C-terminus: Nucleoside diphosphate kinase (143 aa).

Residues K11, F59, R87, T93, R104, and N114 each coordinate ATP. The Pros-phosphohistidine intermediate role is filled by H117.

Belongs to the NDK family. In terms of assembly, homotetramer. Mg(2+) serves as cofactor.

The protein resides in the cytoplasm. It carries out the reaction a 2'-deoxyribonucleoside 5'-diphosphate + ATP = a 2'-deoxyribonucleoside 5'-triphosphate + ADP. It catalyses the reaction a ribonucleoside 5'-diphosphate + ATP = a ribonucleoside 5'-triphosphate + ADP. Its function is as follows. Major role in the synthesis of nucleoside triphosphates other than ATP. The ATP gamma phosphate is transferred to the NDP beta phosphate via a ping-pong mechanism, using a phosphorylated active-site intermediate. The protein is Nucleoside diphosphate kinase of Ectopseudomonas mendocina (strain ymp) (Pseudomonas mendocina).